The sequence spans 83 residues: Small ribosomal subunit protein bS16 (83 aa).

Belongs to the bacterial ribosomal protein bS16 family.

This Cupriavidus taiwanensis (strain DSM 17343 / BCRC 17206 / CCUG 44338 / CIP 107171 / LMG 19424 / R1) (Ralstonia taiwanensis (strain LMG 19424)) protein is Small ribosomal subunit protein bS16.